Consider the following 473-residue polypeptide: Photosystem II CP43 reaction center protein (473 aa).

Residues 1-14 (MKTLYSLRRFYPVE) constitute a propeptide that is removed on maturation. T15 is modified (N-acetylthreonine). T15 carries the post-translational modification Phosphothreonine. 5 helical membrane-spanning segments follow: residues 69 to 93 (LFEVAHFVPEKPMYEQGLILLPHLA), 134 to 155 (LLGPETLEESFPFFGYVWKDRN), 178 to 200 (KALYFGGVYDTWAPGGGDVRKIT), 255 to 275 (KPFAWARRAFVWSGEAYLSYS), and 291 to 312 (WFNNTAYPSEFYGPTGPEASQA). Residue E367 coordinates [CaMn4O5] cluster. The helical transmembrane segment at 447-471 (RARAAAAGFEKGIDRDLEPVLSMTP) threads the bilayer.

The protein belongs to the PsbB/PsbC family. PsbC subfamily. As to quaternary structure, PSII is composed of 1 copy each of membrane proteins PsbA, PsbB, PsbC, PsbD, PsbE, PsbF, PsbH, PsbI, PsbJ, PsbK, PsbL, PsbM, PsbT, PsbX, PsbY, PsbZ, Psb30/Ycf12, at least 3 peripheral proteins of the oxygen-evolving complex and a large number of cofactors. It forms dimeric complexes. It depends on Binds multiple chlorophylls and provides some of the ligands for the Ca-4Mn-5O cluster of the oxygen-evolving complex. It may also provide a ligand for a Cl- that is required for oxygen evolution. PSII binds additional chlorophylls, carotenoids and specific lipids. as a cofactor.

It is found in the plastid. The protein localises to the chloroplast thylakoid membrane. One of the components of the core complex of photosystem II (PSII). It binds chlorophyll and helps catalyze the primary light-induced photochemical processes of PSII. PSII is a light-driven water:plastoquinone oxidoreductase, using light energy to abstract electrons from H(2)O, generating O(2) and a proton gradient subsequently used for ATP formation. This chain is Photosystem II CP43 reaction center protein, found in Dioscorea elephantipes (Elephant's foot yam).